Reading from the N-terminus, the 288-residue chain is Ribosomal RNA small subunit methyltransferase A (288 aa).

Residues Asn-18, Leu-20, Gly-45, Glu-66, Asp-91, and Asn-118 each contribute to the S-adenosyl-L-methionine site.

The protein belongs to the class I-like SAM-binding methyltransferase superfamily. rRNA adenine N(6)-methyltransferase family. RsmA subfamily.

Its subcellular location is the cytoplasm. The enzyme catalyses adenosine(1518)/adenosine(1519) in 16S rRNA + 4 S-adenosyl-L-methionine = N(6)-dimethyladenosine(1518)/N(6)-dimethyladenosine(1519) in 16S rRNA + 4 S-adenosyl-L-homocysteine + 4 H(+). Functionally, specifically dimethylates two adjacent adenosines (A1518 and A1519) in the loop of a conserved hairpin near the 3'-end of 16S rRNA in the 30S particle. May play a critical role in biogenesis of 30S subunits. In Pasteurella multocida (strain Pm70), this protein is Ribosomal RNA small subunit methyltransferase A.